The primary structure comprises 52 residues: uncharacterized protein (52 aa).

A helical membrane pass occupies residues 7–27; sequence MFQLFVFIIFAAVVFAAVTGF.

Its subcellular location is the membrane. This is an uncharacterized protein from Bacillus subtilis (strain 168).